The chain runs to 128 residues: uncharacterized protein (128 aa).

This is an uncharacterized protein from Enterobacteria phage T4 (Bacteriophage T4).